The sequence spans 105 residues: Cuticle protein AM1159 (105 aa).

One can recognise a Chitin-binding type R&amp;R domain in the interval 16 to 81 (DGNFNYNFQT…PESPLLPVGP (66 aa)). Residues 25–46 (TSNGIEDTKTGTPGSQGQSNMQ) are disordered.

Arthrodial membrane.

This Cancer pagurus (Rock crab) protein is Cuticle protein AM1159.